Reading from the N-terminus, the 200-residue chain is MRTSHMLEHLMEALRCLPGVGPKSAQRMAFHLLQRDRKGGLQLAEALSQAMVEIGHCQECRTFTEQDVCHICSNPKRKENGQLCVVESPADIAALEATGQFSGRYFVLMGHLSPLDGIGPSDIGLDTLDYRLQRGDISEVILATNPTVEGEATAQYIAELCREHQVTASRIAHGVPVGGELELVDGTTLSHSLLGRHKLF.

The segment at 57–72 (CQECRTFTEQDVCHIC) adopts a C4-type zinc-finger fold. A Toprim domain is found at 81-176 (GQLCVVESPA…TASRIAHGVP (96 aa)).

The protein belongs to the RecR family.

Its function is as follows. May play a role in DNA repair. It seems to be involved in an RecBC-independent recombinational process of DNA repair. It may act with RecF and RecO. The sequence is that of Recombination protein RecR from Vibrio cholerae serotype O1 (strain ATCC 39541 / Classical Ogawa 395 / O395).